The primary structure comprises 185 residues: Ribosome-recycling factor (185 aa).

It belongs to the RRF family.

It is found in the cytoplasm. Responsible for the release of ribosomes from messenger RNA at the termination of protein biosynthesis. May increase the efficiency of translation by recycling ribosomes from one round of translation to another. In Coxiella burnetii (strain CbuK_Q154) (Coxiella burnetii (strain Q154)), this protein is Ribosome-recycling factor.